Here is a 408-residue protein sequence, read N- to C-terminus: S-adenosylmethionine synthase (408 aa).

Residue 142–147 (GEGSGD) participates in ATP binding.

It belongs to the AdoMet synthase 2 family. Mg(2+) is required as a cofactor.

It carries out the reaction L-methionine + ATP + H2O = S-adenosyl-L-methionine + phosphate + diphosphate. It functions in the pathway amino-acid biosynthesis; S-adenosyl-L-methionine biosynthesis; S-adenosyl-L-methionine from L-methionine: step 1/1. Catalyzes the formation of S-adenosylmethionine from methionine and ATP. This chain is S-adenosylmethionine synthase, found in Halobacterium salinarum (strain ATCC 29341 / DSM 671 / R1).